A 236-amino-acid chain; its full sequence is UPF0502 protein Bpro_3844 (236 aa).

Belongs to the UPF0502 family.

The chain is UPF0502 protein Bpro_3844 from Polaromonas sp. (strain JS666 / ATCC BAA-500).